A 364-amino-acid polypeptide reads, in one-letter code: tRNA 2-selenouridine synthase (364 aa).

The Rhodanese domain maps to Leu-14–Trp-137. The active-site S-selanylcysteine intermediate is the Cys-97.

Belongs to the SelU family. As to quaternary structure, monomer.

It catalyses the reaction 5-methylaminomethyl-2-thiouridine(34) in tRNA + selenophosphate + (2E)-geranyl diphosphate + H2O + H(+) = 5-methylaminomethyl-2-selenouridine(34) in tRNA + (2E)-thiogeraniol + phosphate + diphosphate. The catalysed reaction is 5-methylaminomethyl-2-thiouridine(34) in tRNA + (2E)-geranyl diphosphate = 5-methylaminomethyl-S-(2E)-geranyl-thiouridine(34) in tRNA + diphosphate. The enzyme catalyses 5-methylaminomethyl-S-(2E)-geranyl-thiouridine(34) in tRNA + selenophosphate + H(+) = 5-methylaminomethyl-2-(Se-phospho)selenouridine(34) in tRNA + (2E)-thiogeraniol. It carries out the reaction 5-methylaminomethyl-2-(Se-phospho)selenouridine(34) in tRNA + H2O = 5-methylaminomethyl-2-selenouridine(34) in tRNA + phosphate. Its function is as follows. Involved in the post-transcriptional modification of the uridine at the wobble position (U34) of tRNA(Lys), tRNA(Glu) and tRNA(Gln). Catalyzes the conversion of 2-thiouridine (S2U-RNA) to 2-selenouridine (Se2U-RNA). Acts in a two-step process involving geranylation of 2-thiouridine (S2U) to S-geranyl-2-thiouridine (geS2U) and subsequent selenation of the latter derivative to 2-selenouridine (Se2U) in the tRNA chain. This chain is tRNA 2-selenouridine synthase, found in Salmonella paratyphi A (strain ATCC 9150 / SARB42).